A 133-amino-acid chain; its full sequence is Nucleoside diphosphate kinase (133 aa).

Residues lysine 9, phenylalanine 57, arginine 85, threonine 91, arginine 102, and asparagine 112 each contribute to the ATP site. The active-site Pros-phosphohistidine intermediate is histidine 115.

The protein belongs to the NDK family. Requires Mg(2+) as cofactor.

The protein localises to the cytoplasm. The enzyme catalyses a 2'-deoxyribonucleoside 5'-diphosphate + ATP = a 2'-deoxyribonucleoside 5'-triphosphate + ADP. It catalyses the reaction a ribonucleoside 5'-diphosphate + ATP = a ribonucleoside 5'-triphosphate + ADP. In terms of biological role, major role in the synthesis of nucleoside triphosphates other than ATP. The ATP gamma phosphate is transferred to the NDP beta phosphate via a ping-pong mechanism, using a phosphorylated active-site intermediate. The polypeptide is Nucleoside diphosphate kinase (Methanococcus maripaludis (strain DSM 14266 / JCM 13030 / NBRC 101832 / S2 / LL)).